The following is a 204-amino-acid chain: Venom allergen 5 (204 aa).

Cystine bridges form between cysteine 4–cysteine 17, cysteine 8–cysteine 101, cysteine 26–cysteine 94, and cysteine 170–cysteine 187. The region spanning 45-189 is the SCP domain; that stretch reads LKEHNDFRQK…WHKHYLVCNY (145 aa).

The protein belongs to the CRISP family. Venom allergen 5-like subfamily. In terms of tissue distribution, expressed by the venom gland.

Its subcellular location is the secreted. This is Venom allergen 5 from Vespula maculifrons (Eastern yellow jacket).